An 85-amino-acid polypeptide reads, in one-letter code: Small ribosomal subunit protein uS15 (85 aa).

The protein belongs to the universal ribosomal protein uS15 family. In terms of assembly, part of the 30S ribosomal subunit. Forms a bridge to the 50S subunit in the 70S ribosome, contacting the 23S rRNA.

Functionally, one of the primary rRNA binding proteins, it binds directly to 16S rRNA where it helps nucleate assembly of the platform of the 30S subunit by binding and bridging several RNA helices of the 16S rRNA. Its function is as follows. Forms an intersubunit bridge (bridge B4) with the 23S rRNA of the 50S subunit in the ribosome. The polypeptide is Small ribosomal subunit protein uS15 (Fusobacterium nucleatum subsp. nucleatum (strain ATCC 25586 / DSM 15643 / BCRC 10681 / CIP 101130 / JCM 8532 / KCTC 2640 / LMG 13131 / VPI 4355)).